The chain runs to 459 residues: Alcohol acyl transferase 2 (459 aa).

Catalysis depends on proton acceptor residues His-164 and Asn-385.

It belongs to the plant acyltransferase family. As to expression, highly expressed in the cortex and skin of ripe fruit.

Its function is as follows. Involved in the biosynthesis of volatile esters which confer ripe apple fruit flavor. Alcohol acyl transferase that can use a wide range of alcohols as substrate to produce esters. The protein is Alcohol acyl transferase 2 of Malus domestica (Apple).